We begin with the raw amino-acid sequence, 417 residues long: Lipoyl synthase, mitochondrial (417 aa).

A mitochondrion-targeting transit peptide spans 1 to 26 (MAVCARGLRCLGTPAVSLRLAASRSY). The disordered stretch occupies residues 27–61 (ATTTPPDPAIPNTPGAAATSSPAKRPRTSFQDKLN). The span at 44–58 (ATSSPAKRPRTSFQD) shows a compositional bias: polar residues. Residues Cys134, Cys139, Cys145, Cys165, Cys169, Cys172, and Ser380 each contribute to the [4Fe-4S] cluster site. Residues 148-369 (GGSKSAATAT…KEKALEMGFL (222 aa)) enclose the Radical SAM core domain. Residues 398–417 (ESTGPGSASVQDVATGDLVR) are disordered.

Belongs to the radical SAM superfamily. Lipoyl synthase family. [4Fe-4S] cluster is required as a cofactor.

It is found in the mitochondrion. The enzyme catalyses [[Fe-S] cluster scaffold protein carrying a second [4Fe-4S](2+) cluster] + N(6)-octanoyl-L-lysyl-[protein] + 2 oxidized [2Fe-2S]-[ferredoxin] + 2 S-adenosyl-L-methionine + 4 H(+) = [[Fe-S] cluster scaffold protein] + N(6)-[(R)-dihydrolipoyl]-L-lysyl-[protein] + 4 Fe(3+) + 2 hydrogen sulfide + 2 5'-deoxyadenosine + 2 L-methionine + 2 reduced [2Fe-2S]-[ferredoxin]. It functions in the pathway protein modification; protein lipoylation via endogenous pathway; protein N(6)-(lipoyl)lysine from octanoyl-[acyl-carrier-protein]: step 2/2. Functionally, catalyzes the radical-mediated insertion of two sulfur atoms into the C-6 and C-8 positions of the octanoyl moiety bound to the lipoyl domains of lipoate-dependent enzymes, thereby converting the octanoylated domains into lipoylated derivatives. The chain is Lipoyl synthase, mitochondrial from Uncinocarpus reesii (strain UAMH 1704).